The following is a 796-amino-acid chain: Lon protease 2 (796 aa).

Residues Leu-9 to Ile-206 form the Lon N-terminal domain. Gly-352–Thr-359 serves as a coordination point for ATP. The Lon proteolytic domain maps to Ile-617 to Ile-796. Catalysis depends on residues Ser-702 and Lys-745.

It belongs to the peptidase S16 family. As to quaternary structure, homohexamer. Organized in a ring with a central cavity.

It is found in the cytoplasm. The catalysed reaction is Hydrolysis of proteins in presence of ATP.. In terms of biological role, ATP-dependent serine protease that mediates the selective degradation of mutant and abnormal proteins as well as certain short-lived regulatory proteins. Required for cellular homeostasis and for survival from DNA damage and developmental changes induced by stress. Degrades polypeptides processively to yield small peptide fragments that are 5 to 10 amino acids long. Binds to DNA in a double-stranded, site-specific manner. This is Lon protease 2 (lon2) from Borreliella burgdorferi (strain ATCC 35210 / DSM 4680 / CIP 102532 / B31) (Borrelia burgdorferi).